The sequence spans 69 residues: Large ribosomal subunit protein uL29 (69 aa).

The protein belongs to the universal ribosomal protein uL29 family.

The chain is Large ribosomal subunit protein uL29 from Rhodospirillum centenum (strain ATCC 51521 / SW).